The chain runs to 211 residues: Thymidylate kinase (211 aa).

10 to 17 contacts ATP; sequence GLDGSGKT.

This sequence belongs to the thymidylate kinase family.

The enzyme catalyses dTMP + ATP = dTDP + ADP. In terms of biological role, phosphorylation of dTMP to form dTDP in both de novo and salvage pathways of dTTP synthesis. This Blochmanniella floridana protein is Thymidylate kinase.